The sequence spans 389 residues: Chalcone synthase 1 (389 aa).

Cys164 is a catalytic residue.

It belongs to the thiolase-like superfamily. Chalcone/stilbene synthases family.

It carries out the reaction (E)-4-coumaroyl-CoA + 3 malonyl-CoA + 3 H(+) = 2',4,4',6'-tetrahydroxychalcone + 3 CO2 + 4 CoA. The protein operates within secondary metabolite biosynthesis; flavonoid biosynthesis. In terms of biological role, the primary product of this enzyme is 4,2',4',6'-tetrahydroxychalcone (also termed naringenin-chalcone or chalcone) which can under specific conditions spontaneously isomerize into naringenin. This is Chalcone synthase 1 (CHS1) from Pisum sativum (Garden pea).